Here is a 394-residue protein sequence, read N- to C-terminus: Tryptophan synthase beta chain (394 aa).

Lysine 90 is subject to N6-(pyridoxal phosphate)lysine.

Belongs to the TrpB family. As to quaternary structure, tetramer of two alpha and two beta chains. Requires pyridoxal 5'-phosphate as cofactor.

It carries out the reaction (1S,2R)-1-C-(indol-3-yl)glycerol 3-phosphate + L-serine = D-glyceraldehyde 3-phosphate + L-tryptophan + H2O. The protein operates within amino-acid biosynthesis; L-tryptophan biosynthesis; L-tryptophan from chorismate: step 5/5. The beta subunit is responsible for the synthesis of L-tryptophan from indole and L-serine. In Bacteroides thetaiotaomicron (strain ATCC 29148 / DSM 2079 / JCM 5827 / CCUG 10774 / NCTC 10582 / VPI-5482 / E50), this protein is Tryptophan synthase beta chain.